A 218-amino-acid chain; its full sequence is uncharacterized protein (218 aa).

The first 21 residues, 1–21, serve as a signal peptide directing secretion; that stretch reads MKKFVYKYSFGALLLLSGLSS. The N-palmitoyl cysteine moiety is linked to residue Cys22. Cys22 is lipidated: S-diacylglycerol cysteine.

The protein belongs to the chlamydial CPn_0875/CT_734/TC_0107 family.

It localises to the cell membrane. This is an uncharacterized protein from Chlamydia muridarum (strain MoPn / Nigg).